A 273-amino-acid polypeptide reads, in one-letter code: 4-hydroxy-tetrahydrodipicolinate reductase (273 aa).

NAD(+) is bound by residues 12–17 (GAGGRM) and E38. Residue R39 participates in NADP(+) binding. NAD(+) is bound by residues 102–104 (GTT) and 126–129 (AANF). The active-site Proton donor/acceptor is the H159. H160 lines the (S)-2,3,4,5-tetrahydrodipicolinate pocket. K163 functions as the Proton donor in the catalytic mechanism. 169 to 170 (GT) is a (S)-2,3,4,5-tetrahydrodipicolinate binding site.

It belongs to the DapB family. In terms of assembly, homotetramer.

Its subcellular location is the cytoplasm. The enzyme catalyses (S)-2,3,4,5-tetrahydrodipicolinate + NAD(+) + H2O = (2S,4S)-4-hydroxy-2,3,4,5-tetrahydrodipicolinate + NADH + H(+). It carries out the reaction (S)-2,3,4,5-tetrahydrodipicolinate + NADP(+) + H2O = (2S,4S)-4-hydroxy-2,3,4,5-tetrahydrodipicolinate + NADPH + H(+). It participates in amino-acid biosynthesis; L-lysine biosynthesis via DAP pathway; (S)-tetrahydrodipicolinate from L-aspartate: step 4/4. In terms of biological role, catalyzes the conversion of 4-hydroxy-tetrahydrodipicolinate (HTPA) to tetrahydrodipicolinate. The protein is 4-hydroxy-tetrahydrodipicolinate reductase of Pectobacterium carotovorum subsp. carotovorum (strain PC1).